A 509-amino-acid chain; its full sequence is Histidine ammonia-lyase (509 aa).

Residues 144 to 146 (ASG) constitute a cross-link (5-imidazolinone (Ala-Gly)). S145 bears the 2,3-didehydroalanine (Ser) mark.

Belongs to the PAL/histidase family. In terms of processing, contains an active site 4-methylidene-imidazol-5-one (MIO), which is formed autocatalytically by cyclization and dehydration of residues Ala-Ser-Gly.

The protein localises to the cytoplasm. It catalyses the reaction L-histidine = trans-urocanate + NH4(+). It functions in the pathway amino-acid degradation; L-histidine degradation into L-glutamate; N-formimidoyl-L-glutamate from L-histidine: step 1/3. The polypeptide is Histidine ammonia-lyase (Rhodospirillum centenum (strain ATCC 51521 / SW)).